Consider the following 635-residue polypeptide: MARGLPSTACLARFCQKLNRLKPLEESSMETSLRRCLSTLDLTLLGVGGMVGSGLYVLTGTVAKDMAGPAVLLSFLVAAVASLLAALCYAEFGARVPRTGSAYLFTYVSMGEIWAFLIGWNVLLEYLIGGAAVARAWSGYLDAIFNHSIRNFTESHLGVWQVPFLAHYPDFLAAGILLVASAFVSCGARVSSWLNHTFSAISLIVILFIIVLGFILARPHNWSAEEGGFAPFGFSGILAGTATCFYAFVGFDVIAASSEEAKNPRWAVPMAIAISLSLAAGAYILVSTVLTLMVPWHSLDPDSALADAFYRRGYSWAGFIVAVGSICAMNTVLLSNLFSLPRIVYAMAADGLFFQVFARVHPRTQVPVVGILVFGVLMALLALLLDLEALVQFLSIGTLLAYTFVATSIIVLRFQKASPPSSPCLASPGPTAKKYDSFSDHIQLVGAEQTSMSEPGQLRPALKPFLGFLDGCSPGTAVAWALGILVASAISLACVLVFGNSDLHLPQWGYVLLLVISGAVFLSSLLVLGAHQQQKKQDTFQIPLVPLTPALSILLNTCLMLKLSYLTWLRFIFWLLVGLVVYFGYGIWHSKENQREPLELTTAHYVVFPSGSLEETVQAVQPSSQSPVRESGCTE.

The next 3 helical transmembrane spans lie at 42-62, 66-86, and 113-133; these read LTLL…TGTV, MAGP…LLAA, and IWAF…GAAV. 3 N-linked (GlcNAc...) asparagine glycosylation sites follow: asparagine 146, asparagine 151, and asparagine 195. Residues 197–217 traverse the membrane as a helical segment; sequence TFSAISLIVILFIIVLGFILA. N-linked (GlcNAc...) asparagine glycosylation occurs at asparagine 221. 5 helical membrane passes run 229-249, 270-290, 318-338, 365-385, and 391-411; these read FAPF…YAFV, MAIA…STVL, GFIV…SNLF, QVPV…ALLL, and VQFL…SIIV. 2 positions are modified to phosphoserine: serine 422 and serine 427. 4 consecutive transmembrane segments (helical) span residues 478 to 498, 508 to 528, 539 to 559, and 567 to 587; these read VAWA…VLVF, WGYV…LLVL, TFQI…NTCL, and TWLR…GYGI.

The protein belongs to the amino acid-polyamine-organocation (APC) superfamily. Cationic amino acid transporter (CAT) (TC 2.A.3.3) family.

It is found in the membrane. Functionally, involved in the transport of the cationic amino acids (arginine, lysine and ornithine). The protein is Cationic amino acid transporter 4 (Slc7a4) of Mus musculus (Mouse).